The following is a 502-amino-acid chain: Arabinose import ATP-binding protein AraG (502 aa).

ABC transporter domains lie at 5 to 240 and 253 to 496; these read LEFS…MVGR and LGGI…LPDK. Residue 37-44 coordinates ATP; sequence GENGAGKS.

Belongs to the ABC transporter superfamily. Arabinose importer (TC 3.A.1.2.2) family. As to quaternary structure, the complex is composed of two ATP-binding proteins (AraG), two transmembrane proteins (AraH) and a solute-binding protein (AraF).

It localises to the cell inner membrane. The catalysed reaction is L-arabinose(out) + ATP + H2O = L-arabinose(in) + ADP + phosphate + H(+). Its function is as follows. Part of the ABC transporter complex AraFGH involved in arabinose import. Responsible for energy coupling to the transport system. This chain is Arabinose import ATP-binding protein AraG, found in Rhizobium johnstonii (strain DSM 114642 / LMG 32736 / 3841) (Rhizobium leguminosarum bv. viciae).